A 185-amino-acid polypeptide reads, in one-letter code: Elongation factor P (185 aa).

It belongs to the elongation factor P family.

It localises to the cytoplasm. Its pathway is protein biosynthesis; polypeptide chain elongation. Its function is as follows. Involved in peptide bond synthesis. Stimulates efficient translation and peptide-bond synthesis on native or reconstituted 70S ribosomes in vitro. Probably functions indirectly by altering the affinity of the ribosome for aminoacyl-tRNA, thus increasing their reactivity as acceptors for peptidyl transferase. The polypeptide is Elongation factor P (Lactococcus lactis subsp. cremoris (strain MG1363)).